Here is a 690-residue protein sequence, read N- to C-terminus: Glycine--tRNA ligase beta subunit (690 aa).

The protein belongs to the class-II aminoacyl-tRNA synthetase family. Tetramer of two alpha and two beta subunits.

The protein localises to the cytoplasm. It catalyses the reaction tRNA(Gly) + glycine + ATP = glycyl-tRNA(Gly) + AMP + diphosphate. The polypeptide is Glycine--tRNA ligase beta subunit (Buchnera aphidicola subsp. Acyrthosiphon pisum (strain 5A)).